The sequence spans 371 residues: COP9 signalosome complex subunit 5 (371 aa).

An MPN domain is found at 51–188 (VKISAVALIK…IGAFRTYPEG (138 aa)). His-134, His-136, and Asp-147 together coordinate Zn(2+). The JAMM motif motif lies at 134 to 147 (HSHPGYGCWLSGID). Over residues 278–292 (NSSSKLKLKPTQPTT) the composition is skewed to low complexity. Disordered regions lie at residues 278 to 333 (NSSS…SRIT) and 352 to 371 (TPLTQSVDDKSAQATVQGRY). Over residues 293 to 313 (KGKETTEGSDKKLKKGEKEFS) the composition is skewed to basic and acidic residues. The span at 323 to 333 (NKVTQESSRIT) shows a compositional bias: polar residues.

Belongs to the peptidase M67A family. CSN5 subfamily. As to quaternary structure, component of the COP9 signalosome (CSN) complex.

The protein localises to the cytoplasm. The protein resides in the nucleus. In terms of biological role, catalytic Component of the COP9 signalosome (CSN) complex that acts as an regulator of the ubiquitin (Ubl) conjugation pathway by mediating the deneddylation of the cullin subunit of SCF-type E3 ubiquitin-protein ligase complexes. The polypeptide is COP9 signalosome complex subunit 5 (RRI1) (Cryptococcus neoformans var. neoformans serotype D (strain B-3501A) (Filobasidiella neoformans)).